Reading from the N-terminus, the 295-residue chain is Dual specificity protein phosphatase 15 (295 aa).

A Tyrosine-protein phosphatase domain is found at 1-141 (MTEGVLPGLY…LEEFGWASSQ (141 aa)). Thr2 carries the N-myristoyl glycine lipid modification. Cys85 (phosphocysteine intermediate) is an active-site residue. The segment covering 251–270 (SSSCTLSASTERPDGSSTPG) has biased composition (polar residues). The interval 251 to 272 (SSSCTLSASTERPDGSSTPGNP) is disordered.

The protein belongs to the protein-tyrosine phosphatase family. Non-receptor class dual specificity subfamily. As to expression, highly expressed in testis. Expressed in brain; up-regulated in patients with multiple sclerosis gray matter lesions.

Its subcellular location is the cytoplasm. The protein localises to the cell membrane. The catalysed reaction is O-phospho-L-tyrosyl-[protein] + H2O = L-tyrosyl-[protein] + phosphate. It catalyses the reaction O-phospho-L-seryl-[protein] + H2O = L-seryl-[protein] + phosphate. The enzyme catalyses O-phospho-L-threonyl-[protein] + H2O = L-threonyl-[protein] + phosphate. Functionally, may dephosphorylate MAPK13, ATF2, ERBB3, PDGFRB and SNX6. Its function is as follows. May play a role in the regulation of oligodendrocyte differentiation. May play a role in the regulation of myelin formation. Involved in the regulation of Erk1/2 phosphorylation in Schwann cells; the signaling may be linked to the regulation of myelination. This chain is Dual specificity protein phosphatase 15, found in Homo sapiens (Human).